The chain runs to 509 residues: 2-isopropylmalate synthase (509 aa).

The Pyruvate carboxyltransferase domain maps to 5 to 267; it reads IQIFDTTLRD…QTALNLEETK (263 aa). Residues D14, H202, H204, and N238 each coordinate Mn(2+). Positions 391 to 509 are regulatory domain; the sequence is KLETLQLQYV…AAENVEKVGN (119 aa).

It belongs to the alpha-IPM synthase/homocitrate synthase family. LeuA type 1 subfamily. In terms of assembly, homodimer. Requires Mn(2+) as cofactor.

Its subcellular location is the cytoplasm. The catalysed reaction is 3-methyl-2-oxobutanoate + acetyl-CoA + H2O = (2S)-2-isopropylmalate + CoA + H(+). The protein operates within amino-acid biosynthesis; L-leucine biosynthesis; L-leucine from 3-methyl-2-oxobutanoate: step 1/4. Catalyzes the condensation of the acetyl group of acetyl-CoA with 3-methyl-2-oxobutanoate (2-ketoisovalerate) to form 3-carboxy-3-hydroxy-4-methylpentanoate (2-isopropylmalate). The protein is 2-isopropylmalate synthase of Staphylococcus aureus (strain bovine RF122 / ET3-1).